The following is a 469-amino-acid chain: Spermatogenesis-associated protein 21 (469 aa).

2 disordered regions span residues 1-76 and 99-157; these read MDNR…AGTQ and HRRA…MGAP. Basic and acidic residues predominate over residues 49-61; it reads EVRDIGERREPDR. Residues 62–73 are compositionally biased toward low complexity; sequence AQQQPQKPAVAA. Positions 105–132 are enriched in polar residues; it reads ARSQTAQKSPRTLTPVPTSAPSLPQTPA. Pro residues predominate over residues 146–157; the sequence is APGPEPAPMGAP. The stretch at 198–225 forms a coiled coil; the sequence is EPEEQSLQKLYQNREKSEEQLTLKQEEA. Positions 255–290 constitute an EF-hand domain; it reads VTLAQVEDALMSADVNGDGRVDFKDFLAVMTDTRRF. Ca(2+) is bound by residues Asp-268, Asn-270, Asp-272, Arg-274, and Asp-279. Residues 424–469 form a disordered region; sequence YALDQCTPPGLDPDIRSPFFQSGSQGNREHNSDSRKWLSSVPARTH. The segment covering 450 to 459 has biased composition (basic and acidic residues); it reads NREHNSDSRK.

Functionally, involved in the differentiation of haploid spermatids. The protein is Spermatogenesis-associated protein 21 (SPATA21) of Homo sapiens (Human).